A 331-amino-acid chain; its full sequence is Putative ankyrin repeat protein FPV012 (331 aa).

ANK repeat units follow at residues 11 to 40, 44 to 73, 77 to 106, and 110 to 139; these read DGYT…NPNT, DSYT…NVDK, DGYT…NPNY, and YGIT…NCNQ.

This Vertebrata (FPV) protein is Putative ankyrin repeat protein FPV012.